An 867-amino-acid polypeptide reads, in one-letter code: Replication origin-binding protein (867 aa).

Residues 1–39 (MNVATCTHQTHHAARAPGATSAPGAASGDPLGARRPIGD) form a disordered region. The span at 15–28 (RAPGATSAPGAASG) shows a compositional bias: low complexity. The region spanning 86–251 (ASAPTARCVT…CSLRGEKNVH (166 aa)) is the Helicase ATP-binding domain. An ATP-binding site is contributed by 99-106 (APMGSGKT).

It belongs to the herpesviridae OriBP family. Homodimer. Interacts with the major DNA-binding protein ICP8. Interacts with the helicase/primase component UL8 and the polymerase accessory protein UL42.

Its subcellular location is the host nucleus. In terms of biological role, functions as a docking protein to recruit essential components of the viral replication machinery to viral DNA origins. In the presence of the major DNA-binding protein, opens dsDNA leading to a conformational change in the origin that facilitates DNA unwinding and subsequent replication. The sequence is that of Replication origin-binding protein from Human herpesvirus 2 (strain HG52) (HHV-2).